The sequence spans 338 residues: Uroporphyrinogen decarboxylase (338 aa).

Residues 21-25 (RQAGR), aspartate 71, tyrosine 146, serine 201, and histidine 316 each bind substrate.

Belongs to the uroporphyrinogen decarboxylase family. Homodimer.

Its subcellular location is the cytoplasm. It catalyses the reaction uroporphyrinogen III + 4 H(+) = coproporphyrinogen III + 4 CO2. It functions in the pathway porphyrin-containing compound metabolism; protoporphyrin-IX biosynthesis; coproporphyrinogen-III from 5-aminolevulinate: step 4/4. Functionally, catalyzes the decarboxylation of four acetate groups of uroporphyrinogen-III to yield coproporphyrinogen-III. This Rickettsia akari (strain Hartford) protein is Uroporphyrinogen decarboxylase.